Reading from the N-terminus, the 471-residue chain is ATP synthase subunit beta (471 aa).

159–166 lines the ATP pocket; it reads GGAGVGKT.

This sequence belongs to the ATPase alpha/beta chains family. In terms of assembly, F-type ATPases have 2 components, CF(1) - the catalytic core - and CF(0) - the membrane proton channel. CF(1) has five subunits: alpha(3), beta(3), gamma(1), delta(1), epsilon(1). CF(0) has four main subunits: a(1), b(1), b'(1) and c(9-12).

The protein resides in the cell membrane. It catalyses the reaction ATP + H2O + 4 H(+)(in) = ADP + phosphate + 5 H(+)(out). Produces ATP from ADP in the presence of a proton gradient across the membrane. The catalytic sites are hosted primarily by the beta subunits. The sequence is that of ATP synthase subunit beta from Heliobacterium modesticaldum (strain ATCC 51547 / Ice1).